We begin with the raw amino-acid sequence, 436 residues long: MANVVVIGAQWGDEGKGKITDLLSRSADVVVRYQGGVNAGHTIVVDDKVLKLHLIPSGILYKNTSCLIGSGTVIDPKILLKEIDMLIDNGIDISGLKISSTSHVTMPYHRILDEAMEADRGSNKIGTTGRGIGPTYADKSQRNGIRIRDLLNKERLSDVIEIPLREKNGLLEKIYGIKPLKLEDIVEEYLDYGERLSKHVVDCTRTIHAASKNKKNILFEGAQGTLLDLDHGTYPFVTSSNPISGGACIGAGVGPTLIDRVIGVAKAYTTRVGEGPFPTELQGSINDQLCDRGSEFGTTTGRRRRCGWFDGVIGKYAVSVNGLDCLAVTKLDVLDELDEIQVCIAYDLNGEEIDYFPTNSDDLKKCKPIFKKLKGWQCSTADCRKLSDLPENAMNYLRFLAELMEVPIAIVSLGANRDQTIVIEDPIHGPKRALLR.

Residues 12 to 18 (GDEGKGK) and 40 to 42 (GHT) each bind GTP. The active-site Proton acceptor is Asp13. Asp13 and Gly40 together coordinate Mg(2+). IMP contacts are provided by residues 13–16 (DEGK), 38–41 (NAGH), Thr128, Arg142, Gln223, Thr238, and Arg302. The Proton donor role is filled by His41. 298–304 (TTTGRRR) contributes to the substrate binding site. GTP-binding positions include Arg304, 330-332 (KLD), and 412-414 (SLG).

This sequence belongs to the adenylosuccinate synthetase family. As to quaternary structure, homodimer. It depends on Mg(2+) as a cofactor.

The protein resides in the cytoplasm. It catalyses the reaction IMP + L-aspartate + GTP = N(6)-(1,2-dicarboxyethyl)-AMP + GDP + phosphate + 2 H(+). Its pathway is purine metabolism; AMP biosynthesis via de novo pathway; AMP from IMP: step 1/2. Plays an important role in the de novo pathway of purine nucleotide biosynthesis. Catalyzes the first committed step in the biosynthesis of AMP from IMP. This is Adenylosuccinate synthetase from Prochlorococcus marinus (strain AS9601).